The sequence spans 220 residues: Guanylate kinase (220 aa).

The 180-residue stretch at 15-194 (GLMLVISSPS…AFEGIEAIVK (180 aa)) folds into the Guanylate kinase-like domain. Residue 22-29 (SPSGAGKS) coordinates ATP.

This sequence belongs to the guanylate kinase family.

The protein localises to the cytoplasm. The enzyme catalyses GMP + ATP = GDP + ADP. In terms of biological role, essential for recycling GMP and indirectly, cGMP. This Agrobacterium fabrum (strain C58 / ATCC 33970) (Agrobacterium tumefaciens (strain C58)) protein is Guanylate kinase.